Consider the following 292-residue polypeptide: 4-hydroxybenzoate solanesyltransferase (292 aa).

A run of 9 helical transmembrane segments spans residues 28-48 (LILMIPALWAVCLAAQGLPPL), 49-69 (PLLGTIALGTLATSGLGCVVN), 97-117 (VGIGVALVALLCAAGLAFYLT), 118-138 (PLSFWLCVAAVPVIVAYPGAK), 140-160 (VFPVPQLVLSIAWGFAVLISW), 172-192 (WVLWGATVFWTLGFDTVYAMA), 217-237 (VGIFFALTIGCLFYLGMILML), 239-259 (PLYWLSLAIAIVGWVIQYIQL), and 272-292 (IFGQNVIIGFVLLAGMLLGWL).

It belongs to the UbiA prenyltransferase family. Mg(2+) serves as cofactor.

Its subcellular location is the cell inner membrane. It catalyses the reaction all-trans-nonaprenyl diphosphate + 4-hydroxybenzoate = 4-hydroxy-3-(all-trans-nonaprenyl)benzoate + diphosphate. Catalyzes the prenylation of para-hydroxybenzoate (PHB) with an all-trans polyprenyl group. Mediates the second step in the final reaction sequence of plastoquinone-9 (PQ-9) biosynthesis, which is the condensation of the polyisoprenoid side chain with PHB, generating the first membrane-bound Q intermediate 4-hydroxy-3-solanesylbenzoate. This chain is 4-hydroxybenzoate solanesyltransferase, found in Synechocystis sp. (strain ATCC 27184 / PCC 6803 / Kazusa).